We begin with the raw amino-acid sequence, 277 residues long: Caspase-3 (277 aa).

Met1 is subject to N-acetylmethionine. 2 consecutive propeptides follow at residues 1–9 (MENSENSVD) and 10–28 (AKSI…KSMD). Residue Lys11 is modified to N6-acetyllysine. Ser26 is subject to Phosphoserine. Catalysis depends on residues His121 and Cys163. The residue at position 163 (Cys163) is an S-nitrosocysteine; in inhibited form.

The protein belongs to the peptidase C14A family. As to quaternary structure, heterotetramer that consists of two anti-parallel arranged heterodimers, each one formed by a 17 kDa (p17) and a 12 kDa (p12) subunit. Interacts with BIRC6/bruce. Cleavage by granzyme B, caspase-6, caspase-8 and caspase-10 generates the two active subunits. Additional processing of the propeptides is likely due to the autocatalytic activity of the activated protease. Active heterodimers between the small subunit of caspase-7 protease and the large subunit of caspase-3 also occur and vice versa. In terms of processing, S-nitrosylated on its catalytic site cysteine in unstimulated cell lines and denitrosylated upon activation of the Fas apoptotic pathway, associated with an increase in intracellular caspase activity. Fas therefore activates caspase-3 not only by inducing the cleavage of the caspase zymogen to its active subunits, but also by stimulating the denitrosylation of its active site thiol. Post-translationally, ubiquitinated by BIRC6; this activity is inhibited by DIABLO/SMAC.

It is found in the cytoplasm. It carries out the reaction Strict requirement for an Asp residue at positions P1 and P4. It has a preferred cleavage sequence of Asp-Xaa-Xaa-Asp-|- with a hydrophobic amino-acid residue at P2 and a hydrophilic amino-acid residue at P3, although Val or Ala are also accepted at this position.. Its activity is regulated as follows. Inhibited by BIRC6; following inhibition of BIRC6-caspase binding by DIABLO/SMAC, BIRC6 is subjected to caspase cleavage, leading to an increase in active caspases. Functionally, involved in the activation cascade of caspases responsible for apoptosis execution. At the onset of apoptosis, it proteolytically cleaves poly(ADP-ribose) polymerase PARP1 at a '216-Asp-|-Gly-217' bond. Cleaves and activates sterol regulatory element binding proteins (SREBPs) between the basic helix-loop-helix leucine zipper domain and the membrane attachment domain. Cleaves and activates caspase-6, -7 and -9 (CASP6, CASP7 and CASP9, respectively). Cleaves and inactivates interleukin-18 (IL18). Triggers cell adhesion in sympathetic neurons through RET cleavage. Cleaves IL-1 beta between an Asp and an Ala, releasing the mature cytokine which is involved in a variety of inflammatory processes. Cleaves and inhibits serine/threonine-protein kinase AKT1 in response to oxidative stress. Acts as an inhibitor of type I interferon production during virus-induced apoptosis by mediating cleavage of antiviral proteins CGAS, IRF3 and MAVS, thereby preventing cytokine overproduction. Also involved in pyroptosis by mediating cleavage and activation of gasdermin-E (GSDME). Cleaves XRCC4 and phospholipid scramblase proteins XKR4, XKR8 and XKR9, leading to promote phosphatidylserine exposure on apoptotic cell surface. Cleaves BIRC6 following inhibition of BIRC6-caspase binding by DIABLO/SMAC. This is Caspase-3 (CASP3) from Felis catus (Cat).